The primary structure comprises 283 residues: Light-independent protochlorophyllide reductase iron-sulfur ATP-binding protein (283 aa).

ATP is bound by residues 15-20 (GIGKST) and K44. S19 is a Mg(2+) binding site. [4Fe-4S] cluster is bound by residues C100 and C134. Residue 185-186 (NR) coordinates ATP.

Belongs to the NifH/BchL/ChlL family. In terms of assembly, homodimer. Protochlorophyllide reductase is composed of three subunits; ChlL, ChlN and ChlB. Requires [4Fe-4S] cluster as cofactor.

It carries out the reaction chlorophyllide a + oxidized 2[4Fe-4S]-[ferredoxin] + 2 ADP + 2 phosphate = protochlorophyllide a + reduced 2[4Fe-4S]-[ferredoxin] + 2 ATP + 2 H2O. It functions in the pathway porphyrin-containing compound metabolism; chlorophyll biosynthesis (light-independent). Its function is as follows. Component of the dark-operative protochlorophyllide reductase (DPOR) that uses Mg-ATP and reduced ferredoxin to reduce ring D of protochlorophyllide (Pchlide) to form chlorophyllide a (Chlide). This reaction is light-independent. The L component serves as a unique electron donor to the NB-component of the complex, and binds Mg-ATP. The chain is Light-independent protochlorophyllide reductase iron-sulfur ATP-binding protein from Synechococcus sp. (strain JA-2-3B'a(2-13)) (Cyanobacteria bacterium Yellowstone B-Prime).